A 155-amino-acid chain; its full sequence is Ribosome maturation factor RimP (155 aa).

Belongs to the RimP family.

It is found in the cytoplasm. Functionally, required for maturation of 30S ribosomal subunits. The chain is Ribosome maturation factor RimP from Lachnoclostridium phytofermentans (strain ATCC 700394 / DSM 18823 / ISDg) (Clostridium phytofermentans).